A 490-amino-acid chain; its full sequence is Betaine aldehyde dehydrogenase (490 aa).

Residues T26, I27, and D93 each contribute to the K(+) site. 150 to 152 serves as a coordination point for NAD(+); it reads GAW. The active-site Charge relay system is K162. Residue 176–179 participates in NAD(+) binding; sequence KPSE. V180 contributes to the K(+) binding site. NAD(+) is bound at residue 230-233; it reads GVAS. Position 246 (L246) interacts with K(+). E252 serves as the catalytic Proton acceptor. 3 residues coordinate NAD(+): G254, C286, and E387. The Nucleophile role is filled by C286. C286 is subject to Cysteine sulfenic acid (-SOH). 2 residues coordinate K(+): K457 and G460. The active-site Charge relay system is E464.

The protein belongs to the aldehyde dehydrogenase family. Dimer of dimers. It depends on K(+) as a cofactor.

It carries out the reaction betaine aldehyde + NAD(+) + H2O = glycine betaine + NADH + 2 H(+). Its pathway is amine and polyamine biosynthesis; betaine biosynthesis via choline pathway; betaine from betaine aldehyde: step 1/1. Functionally, involved in the biosynthesis of the osmoprotectant glycine betaine. Catalyzes the irreversible oxidation of betaine aldehyde to the corresponding acid. The polypeptide is Betaine aldehyde dehydrogenase (Escherichia coli O8 (strain IAI1)).